Consider the following 138-residue polypeptide: Large ribosomal subunit protein uL16 (138 aa).

Basic residues predominate over residues 1–19; the sequence is MLIPKRVKYRRQHRPHRSG. The disordered stretch occupies residues 1-24; the sequence is MLIPKRVKYRRQHRPHRSGVSKGG.

This sequence belongs to the universal ribosomal protein uL16 family. As to quaternary structure, part of the 50S ribosomal subunit.

In terms of biological role, binds 23S rRNA and is also seen to make contacts with the A and possibly P site tRNAs. In Corynebacterium diphtheriae (strain ATCC 700971 / NCTC 13129 / Biotype gravis), this protein is Large ribosomal subunit protein uL16.